The primary structure comprises 245 residues: 1-(5-phosphoribosyl)-5-[(5-phosphoribosylamino)methylideneamino] imidazole-4-carboxamide isomerase (245 aa).

Catalysis depends on Asp-8, which acts as the Proton acceptor. Asp-130 serves as the catalytic Proton donor.

This sequence belongs to the HisA/HisF family.

The protein localises to the cytoplasm. It carries out the reaction 1-(5-phospho-beta-D-ribosyl)-5-[(5-phospho-beta-D-ribosylamino)methylideneamino]imidazole-4-carboxamide = 5-[(5-phospho-1-deoxy-D-ribulos-1-ylimino)methylamino]-1-(5-phospho-beta-D-ribosyl)imidazole-4-carboxamide. It participates in amino-acid biosynthesis; L-histidine biosynthesis; L-histidine from 5-phospho-alpha-D-ribose 1-diphosphate: step 4/9. This Pseudomonas putida (strain GB-1) protein is 1-(5-phosphoribosyl)-5-[(5-phosphoribosylamino)methylideneamino] imidazole-4-carboxamide isomerase.